Here is a 654-residue protein sequence, read N- to C-terminus: MKDPQSPNESFDIIVIGGGHAGCEAAITTAKLGFSTALFTINLDRIAWQPCNPAVGGPAKSQLVHEIDALGGIIGQLADETAIQKRILNASRGPAVWALRAQTDKREYSKRMIEILQNTDNLSLKEAMITELVIKEAETFSNNLKNKTKKIKGVKTFFGTYYYAKSIIITAGTFLEGRIWIGNKSMSAGRSGEQAAQGLTQSLHNLGIKTERLKTGTPARVDKKSISFDELDIQPSTASDKYFSFDPKIKNNMPQVSCHITRTTLKTHELIRNNLHLTPIYGGFIDSKGPRYCPSIEDKIVKFADKNSHQIFLEPEGINTPEIYVQGFSTGLPENIQLDLLRTLPGLNKCKMLRPAYAVEYEYIPATQLKSSLETIEIENLFSAGQINGTTGYEEAAAQGLVAGINATRKLNMKDPIIFSRESSYIGTMINDLITRDLKEPYRVLTSRSEYRLTLRGDNADRRLTPLGFEIGLIDERRWLAHKKKMKSLKEENSRLENTRLKCTDEIAKKIELDSGSKIKGSTTLKELLKRPNLHYSDFIRYDLVDKTLPISVIEGVEIDIKYEGYLKRQKNNIDQINRQSLKSLSSEINYDQIDTLSLEARENLNKIKPTNFGDASKIPGVSKADLTALLVWLKIKELKNEKKTSFAEKKLSS.

Residue 17–22 (GGGHAG) participates in FAD binding. 289-303 (GPRYCPSIEDKIVKF) contacts NAD(+).

The protein belongs to the MnmG family. Homodimer. Heterotetramer of two MnmE and two MnmG subunits. FAD serves as cofactor.

It localises to the cytoplasm. Its function is as follows. NAD-binding protein involved in the addition of a carboxymethylaminomethyl (cmnm) group at the wobble position (U34) of certain tRNAs, forming tRNA-cmnm(5)s(2)U34. The protein is tRNA uridine 5-carboxymethylaminomethyl modification enzyme MnmG of Prochlorococcus marinus subsp. pastoris (strain CCMP1986 / NIES-2087 / MED4).